The chain runs to 368 residues: H-2 class I histocompatibility antigen, K-W28 alpha chain (368 aa).

A signal peptide spans 1–21 (MAPCMLLLLLAAALAPTQTRA). Residues 22–111 (GPHSLRYFHT…LLRYYNQSAG (90 aa)) form an alpha-1 region. The Extracellular segment spans residues 22 to 305 (GPHSLRYFHT…EPPPSAVSNT (284 aa)). Asn107 is a glycosylation site (N-linked (GlcNAc...) asparagine). The alpha-2 stretch occupies residues 112-203 (GSHTIQRMYG…KNGNATLLRT (92 aa)). Cys122 and Cys185 are joined by a disulfide. The N-linked (GlcNAc...) asparagine glycan is linked to Asn197. Residues 204-295 (DSPKAHVTHH…GLPKPLTLRW (92 aa)) are alpha-3. Positions 206–292 (PKAHVTHHSR…YHQGLPKPLT (87 aa)) constitute an Ig-like C1-type domain. A disulfide bond links Cys224 and Cys280. The connecting peptide stretch occupies residues 296–305 (EPPPSAVSNT). The helical transmembrane segment at 306 to 329 (VIIAVLVVLGAAIVTGAVVAFVMM) threads the bilayer. Over 330–368 (RRRNTGGKGGDYALAPGSQTSDLSLPDCKVMVHDPHSLA) the chain is Cytoplasmic. Phosphoserine occurs at positions 350 and 353.

This sequence belongs to the MHC class I family. In terms of assembly, heterodimer of an alpha chain and a beta chain (beta-2-microglobulin).

The protein localises to the membrane. Its function is as follows. Involved in the presentation of foreign antigens to the immune system. In Mus musculus (Mouse), this protein is H-2 class I histocompatibility antigen, K-W28 alpha chain (H2-K1).